Reading from the N-terminus, the 213-residue chain is Uridine kinase (213 aa).

Position 15 to 22 (15 to 22) interacts with ATP; the sequence is GGSGSGKT.

Belongs to the uridine kinase family.

The protein localises to the cytoplasm. The catalysed reaction is uridine + ATP = UMP + ADP + H(+). It catalyses the reaction cytidine + ATP = CMP + ADP + H(+). Its pathway is pyrimidine metabolism; CTP biosynthesis via salvage pathway; CTP from cytidine: step 1/3. It participates in pyrimidine metabolism; UMP biosynthesis via salvage pathway; UMP from uridine: step 1/1. The sequence is that of Uridine kinase from Ligilactobacillus salivarius (strain UCC118) (Lactobacillus salivarius).